An 872-amino-acid chain; its full sequence is Cadherin-1 (872 aa).

A signal peptide spans 1–25 (MGLKRPWLLGAVVLLTLIQVQGGLA). Positions 26 to 148 (EWTQCRMGFS…SETGLKRQKR (123 aa)) are excised as a propeptide. Cadherin domains lie at 148-256 (RDWV…DPVF), 257-370 (TQSV…PPVF), 371-481 (DPTQ…APIF), 482-589 (LPPV…GPFL), and 605-688 (VFTI…MQCE). At 149–701 (DWVIPPIIVS…AIAGGLGISA (553 aa)) the chain is on the extracellular side. The N-linked (GlcNAc...) asparagine glycan is linked to Asn-209. Ca(2+) contacts are provided by Asp-251 and Asp-282. 4 N-linked (GlcNAc...) asparagine glycosylation sites follow: Asn-456, Asn-552, Asn-631, and Asn-669. Residues 702 to 722 (IVGILGGILALLLLLLLLLLF) form a helical membrane-spanning segment. The Cytoplasmic portion of the chain corresponds to 723–872 (VRRKKVVKEP…LADMYGGDED (150 aa)). The segment at 739–758 (ETRDNVFSYDEEGGGEEDQD) is disordered. Acidic residues predominate over residues 747 to 758 (YDEEGGGEEDQD).

As to quaternary structure, homodimer. Abundantly expressed in intestine, stomach, liver, kidney, skin and eye. Also expressed in heart, lung, testis, ovary, muscle and brain.

It localises to the cell junction. It is found in the adherens junction. The protein resides in the cell membrane. Its subcellular location is the endosome. The protein localises to the golgi apparatus. It localises to the trans-Golgi network. It is found in the cytoplasm. The protein resides in the desmosome. In terms of biological role, cadherins are calcium-dependent cell adhesion proteins. They preferentially interact with themselves in a homophilic manner in connecting cells; cadherins may thus contribute to the sorting of heterogeneous cell types. Promotes organization of radial actin fiber structure and cellular response to contractile forces, via anchoring of radial actin fibers to CDH1 junction complexes at the cell membrane. E-cadherin is a ligand for integrin alpha-E/beta-7. This Xenopus laevis (African clawed frog) protein is Cadherin-1 (cdh1).